Reading from the N-terminus, the 330-residue chain is Serine/threonine-protein phosphatase PP1-alpha catalytic subunit (330 aa).

S2 carries the post-translational modification N-acetylserine. 2 positions are modified to phosphoserine: S2 and S22. Mn(2+) contacts are provided by D64, H66, D92, and N124. The active-site Proton donor is H125. 2 residues coordinate Mn(2+): H173 and H248. K305 is subject to N6-acetyllysine. Residue Y306 is modified to Phosphotyrosine. A disordered region spans residues 306 to 330 (YGQFSGLNPGGRPITPPRNSAKAKK). The residue at position 320 (T320) is a Phosphothreonine. S325 is subject to Phosphoserine.

The protein belongs to the PPP phosphatase family. PP-1 subfamily. In terms of assembly, PP1 comprises a catalytic subunit, PPP1CA, PPP1CB or PPP1CC, which is folded into its native form by inhibitor 2 and glycogen synthetase kinase 3, and then complexed to one or several targeting or regulatory subunits. PPP1R12A, PPP1R12B and PPP1R12C mediate binding to myosin. PPP1R3A (in skeletal muscle), PPP1R3B (in liver), PPP1R3C, PPP1R3D and PPP1R3F (in brain) mediate binding to glycogen. Interacts with PPP1R15A and PPP1R15B; the interactions mediate binding to EIF2S1. Part of a complex containing PPP1R15B, PP1 and NCK1/2. Interacts with PPP1R9A, PPP1R9B and PPP1R7. Interacts with YLPM1. Forms a complex with ILF2, ILF3, YLPM1, KHDRBS1, RBMX and NCOA5. Interacts with NOM1 and PPP1R8. Interacts with PPP1R16B. Interacts with RPSA only in the presence of PPP1R16B. Component of the PNUTS-PP1 phosphatase complex, composed of PPP1R10/PNUTS, TOX4, WDR82, and PPP1CA or PPP1CB or PPP1CC. Interacts with PPP1R10/PNUTS and PPP1R8. Interacts with WDR82 in the presence of PPP1R10/PNUTS. Interacts with PPP1R39. transition from mitosis into interphase. Interacts with TRIM28; the interaction dephosphorylates TRIM28 on 'Ser-824' and forms a complex at the p21 promoter site. Interacts with NEK2. Interacts with PHACTR4; which acts as an activator of PP1 activity. Interacts with FER; this promotes phosphorylation at Thr-320. Interacts with BTBD10. Interacts with KCTD20. Interacts with FOXP3. Interacts with CENPA. Interacts with ATG16L1. Found in a complex with PPP1CA, PPP1CC, SHC1 and PEAK1. Interacts with tensin TNS1. Interacts with SAXO4, PPP1R21, PPP1R26, PPP1R27, PPP1R35, PPP1R36, PPP1R37, SH3RF2, ELFN1 and ELFN2. Interacts with TPRN; the interaction results in inhibition of PPC1A phosphatase activity. Interacts with SKA1 (via C-terminus); the interaction is direct and required for the recruitment of PP1 to the kinetochore. Interacts with the KNL1 complex subunit KNL1; the interaction is direct and mutually exclusive with KNL1 binding to microtubules. Component of the SHOC2-MRAS-PP1c (SMP) complex consisting of SHOC2, GTP-bound M-Ras/MRAS and the catalytic subunit of protein phosphatase 1 (either PPP1CA, PPP1CB or PPP1CC). SHOC2 and PP1c preferably bind M-Ras/MRAS, but they also bind K-Ras/KRAS, N-Ras/NRAS and H-Ras/HRAS; these interactions are GTP-dependent and both SHOC2 and PP1c are required to form a stable complex. Interacts with SHOC2 in the absence of Ras GTPases. Requires Mn(2+) as cofactor. In terms of processing, phosphorylated. Dephosphorylated at Thr-320 in the presence of ionizing radiation.

Its subcellular location is the cytoplasm. It localises to the nucleus. The protein resides in the nucleoplasm. It is found in the nucleolus. The enzyme catalyses O-phospho-L-seryl-[protein] + H2O = L-seryl-[protein] + phosphate. The catalysed reaction is O-phospho-L-threonyl-[protein] + H2O = L-threonyl-[protein] + phosphate. Protein phosphatase that associates with over 200 regulatory proteins to form highly specific holoenzymes which dephosphorylate hundreds of biological targets. Protein phosphatase 1 (PP1) is essential for cell division, transcription elongation, and participates in the regulation of glycogen metabolism, muscle contractility and protein synthesis. Involved in regulation of ionic conductances and long-term synaptic plasticity. May play an important role in dephosphorylating substrates such as the postsynaptic density-associated Ca(2+)/calmodulin dependent protein kinase II. Catalytic component of the PNUTS-PP1 protein phosphatase complex, a protein phosphatase 1 (PP1) complex that promotes RNA polymerase II transcription pause-release, allowing transcription elongation: the PNUTS-PP1 complex mediates the release of RNA polymerase II from promoter-proximal region of genes by catalyzing dephosphorylation of proteins involved in transcription, such as AFF4, CDK9, MEPCE, INTS12, NCBP1, POLR2M/GDOWN1 and SUPT6H. The PNUTS-PP1 complex also regulates transcription termination by mediating dephosphorylation of SUPT5H in termination zones downstream of poly(A) sites, thereby promoting deceleration of RNA polymerase II transcription. PNUTS-PP1 complex is also involved in the response to replication stress by mediating dephosphorylation of POLR2A at 'Ser-5' of the CTD, promoting RNA polymerase II degradation. PNUTS-PP1 also plays a role in the control of chromatin structure and cell cycle progression during the transition from mitosis into interphase. Regulates NEK2 function in terms of kinase activity and centrosome number and splitting, both in the presence and absence of radiation-induced DNA damage. Regulator of neural tube and optic fissure closure, and enteric neural crest cell (ENCCs) migration during development. In balance with CSNK1D and CSNK1E, determines the circadian period length, through the regulation of the speed and rhythmicity of PER1 and PER2 phosphorylation. May dephosphorylate CSNK1D and CSNK1E. Dephosphorylates the 'Ser-418' residue of FOXP3 in regulatory T-cells (Treg) from patients with rheumatoid arthritis, thereby inactivating FOXP3 and rendering Treg cells functionally defective. Dephosphorylates CENPA. Dephosphorylates the 'Ser-139' residue of ATG16L1 causing dissociation of ATG12-ATG5-ATG16L1 complex, thereby inhibiting autophagy. Together with PPP1CC (PP1-gamma subunit), dephosphorylates IFIH1/MDA5 and RIG-I leading to their activation and a functional innate immune response. Core component of the SHOC2-MRAS-PP1c (SMP) holophosphatase complex that regulates the MAPK pathway activation. The SMP complex specifically dephosphorylates the inhibitory phosphorylation at 'Ser-259' of RAF1 kinase, 'Ser-365' of BRAF kinase and 'Ser-214' of ARAF kinase, stimulating their kinase activities. The SMP complex enhances the dephosphorylation activity and substrate specificity of PP1c. The polypeptide is Serine/threonine-protein phosphatase PP1-alpha catalytic subunit (PPP1CA) (Canis lupus familiaris (Dog)).